The sequence spans 354 residues: Ferrochelatase (354 aa).

Residues H214 and E295 each coordinate Fe cation.

It belongs to the ferrochelatase family.

It is found in the cytoplasm. It catalyses the reaction heme b + 2 H(+) = protoporphyrin IX + Fe(2+). It functions in the pathway porphyrin-containing compound metabolism; protoheme biosynthesis; protoheme from protoporphyrin-IX: step 1/1. In terms of biological role, catalyzes the ferrous insertion into protoporphyrin IX. The sequence is that of Ferrochelatase from Burkholderia orbicola (strain MC0-3).